A 266-amino-acid chain; its full sequence is Large ribosomal subunit protein eL8 (266 aa).

Residues K11, K20, and K21 each participate in a glycyl lysine isopeptide (Lys-Gly) (interchain with G-Cter in SUMO2) cross-link. Position 34 is an N6-acetyllysine (K34). K48 is covalently cross-linked (Glycyl lysine isopeptide (Lys-Gly) (interchain with G-Cter in SUMO2)). N6-acetyllysine; alternate is present on K97. A Glycyl lysine isopeptide (Lys-Gly) (interchain with G-Cter in SUMO2); alternate cross-link involves residue K97. K125 participates in a covalent cross-link: Glycyl lysine isopeptide (Lys-Gly) (interchain with G-Cter in SUMO2). Residue K217 is modified to N6-acetyllysine. A Glycyl lysine isopeptide (Lys-Gly) (interchain with G-Cter in SUMO2) cross-link involves residue K245.

It belongs to the eukaryotic ribosomal protein eL8 family. As to quaternary structure, component of the large ribosomal subunit. Interacts with CRY1. Interacts with DICER1, AGO2, TARBP2, MOV10 and EIF6; they form a large RNA-induced silencing complex (RISC).

The protein resides in the cytoplasm. Its function is as follows. Component of the large ribosomal subunit. The ribosome is a large ribonucleoprotein complex responsible for the synthesis of proteins in the cell. This Bos taurus (Bovine) protein is Large ribosomal subunit protein eL8 (RPL7A).